The chain runs to 296 residues: MYTRLLQSTTRLHPRAWDFIQLMRLDKPIGIYLLLWPTLWALWVAAEGVPSAKNLFIFVFGVILMRAAGCVINDYADRNFDGHVSRTRARPLASGKIQPREALVLFAVLVTASFVLVLFTNATTIWLSFGGLALAACYPFMKRYTFYPQVVLGAAFSWGMPMAFTAETGSLPPEAWLLYIANLLWTVAYDTYYAMADREDDLKIGVKSTAILFGDADRLIIASLQGLALLCLLLAGARFELGVWFHAGLLVAAACFVWEYHKTRNRKPMACFNAFLHNHWAGLAIFVGIVLDYALR.

9 helical membrane-spanning segments follow: residues 29–49 (IGIYLLLWPTLWALWVAAEGV), 55–75 (LFIFVFGVILMRAAGCVINDY), 102–122 (ALVLFAVLVTASFVLVLFTNA), 124–141 (TIWLSFGGLALAACYPFM), 146–166 (FYPQVVLGAAFSWGMPMAFTA), 169–189 (GSLPPEAWLLYIANLLWTVAY), 216–236 (ADRLIIASLQGLALLCLLLAG), 239–259 (FELGVWFHAGLLVAAACFVWE), and 271–291 (CFNAFLHNHWAGLAIFVGIVL).

It belongs to the UbiA prenyltransferase family. Mg(2+) serves as cofactor.

It is found in the cell inner membrane. It carries out the reaction all-trans-octaprenyl diphosphate + 4-hydroxybenzoate = 4-hydroxy-3-(all-trans-octaprenyl)benzoate + diphosphate. It functions in the pathway cofactor biosynthesis; ubiquinone biosynthesis. Catalyzes the prenylation of para-hydroxybenzoate (PHB) with an all-trans polyprenyl group. Mediates the second step in the final reaction sequence of ubiquinone-8 (UQ-8) biosynthesis, which is the condensation of the polyisoprenoid side chain with PHB, generating the first membrane-bound Q intermediate 3-octaprenyl-4-hydroxybenzoate. This is 4-hydroxybenzoate octaprenyltransferase from Ectopseudomonas mendocina (strain ymp) (Pseudomonas mendocina).